The following is an 856-amino-acid chain: Inactive rhomboid protein 1 (856 aa).

The interval 1-20 (MSEARRDSTSSLQRKKPPWL) is disordered. Residues 1–412 (MSEARRDSTS…HRPFFTYWLT (412 aa)) are Cytoplasmic-facing. Ser-76 and Ser-176 each carry phosphoserine. Phosphothreonine is present on residues Thr-180 and Thr-183. At Ser-391 the chain carries Phosphoserine. Residues 413-433 (FVHSLVTILAVCIYGIAPVGF) traverse the membrane as a helical segment. At 434–656 (SQHETVDSVL…NPEVPDQFYR (223 aa)) the chain is on the lumenal side. A glycan (N-linked (GlcNAc...) asparagine) is linked at Asn-584. The chain crosses the membrane as a helical span at residues 657–677 (LWLSLFLHAGILHCLVSVCFQ). The Cytoplasmic segment spans residues 678-692 (MTVLRDLEKLAGWHR). A helical transmembrane segment spans residues 693-713 (IAIIYLLSGVTGNLASAIFLP). Residues 714 to 715 (YR) are Lumenal-facing. A helical transmembrane segment spans residues 716–736 (AEVGPAGSQFGILACLFVELF). Topologically, residues 737–747 (QSWQILARPWR) are cytoplasmic. The chain crosses the membrane as a helical span at residues 748 to 768 (AFFKLLAVVLFLFAFGLLPWI). The Lumenal segment spans residues 769-773 (DNFAH). Residues 774 to 794 (ISGFVSGLFLSFAFLPYISFG) form a helical membrane-spanning segment. Residues 795–804 (KFDLYRKRCQ) lie on the Cytoplasmic side of the membrane. The chain crosses the membrane as a helical span at residues 805–825 (IIIFQAVFLGLLAGLVVLFYF). The Lumenal portion of the chain corresponds to 826–856 (YPVRCEWCEFLTCIPFTDKFCEKYELDAQLH).

It belongs to the peptidase S54 family. As to quaternary structure, homodimer, or homooligomer. Interacts with TGFA and HBEGF. Interacts with EGF; may retain EGF in the endoplasmic reticulum and regulates its degradation through the endoplasmic reticulum-associated degradation (ERAD). Interacts (via cytoplasmic N-terminus) with FRMD8/iTAP; this interaction leads to mutual protein stabilization. Interacts with ADAM17/TACE.

The protein resides in the endoplasmic reticulum membrane. Its subcellular location is the golgi apparatus membrane. Regulates ADAM17 protease, a sheddase of the epidermal growth factor (EGF) receptor ligands and TNF, thereby plays a role in sleep, cell survival, proliferation, migration and inflammation. Does not exhibit any protease activity on its own. In Rattus norvegicus (Rat), this protein is Inactive rhomboid protein 1 (Rhbdf1).